A 498-amino-acid chain; its full sequence is Cytoskeletal signaling protein slm1 (498 aa).

Residues 1–23 (MELSGKSEFPTRTEIPNQASNGD) are disordered. Ser-175 and Ser-312 each carry phosphoserine. The PH domain occupies 300–405 (VPIMAGYLIR…WWEALNTHIA (106 aa)). The tract at residues 416–475 (ANGPSAVSDSDDDDDDPNDFRPAVERQSSTMNTRMSQPSSAVNTNRSYGSEQIPSYADSQ) is disordered. Polar residues predominate over residues 441–475 (RQSSTMNTRMSQPSSAVNTNRSYGSEQIPSYADSQ).

It localises to the cell tip. In terms of biological role, effector of the TORC2- and calcineurin-signaling pathways. Mediates actin polarization via inhibition of calcineurin-dependent transcription. May play a role in the response to the disruption of sphingolipid synthesis, where dephosphorylation of slm1 leads to the activation and phosphorylation of ypk1 through the TORC2 and PKH1 pathways, which in turn phosphorylates orm1 and lag1 to activate sphingolipid synthesis. The polypeptide is Cytoskeletal signaling protein slm1 (slm1) (Schizosaccharomyces pombe (strain 972 / ATCC 24843) (Fission yeast)).